The sequence spans 477 residues: Glycogen synthase (477 aa).

Lys15 contributes to the ADP-alpha-D-glucose binding site.

Belongs to the glycosyltransferase 1 family. Bacterial/plant glycogen synthase subfamily.

The enzyme catalyses [(1-&gt;4)-alpha-D-glucosyl](n) + ADP-alpha-D-glucose = [(1-&gt;4)-alpha-D-glucosyl](n+1) + ADP + H(+). It participates in glycan biosynthesis; glycogen biosynthesis. Synthesizes alpha-1,4-glucan chains using ADP-glucose. The polypeptide is Glycogen synthase (Streptococcus pneumoniae (strain Hungary19A-6)).